The sequence spans 99 residues: Cell division protein FtsB (99 aa).

Over 1–3 (MRV) the chain is Cytoplasmic. A helical transmembrane segment spans residues 4–21 (FTAILLILLVLLQYRLWF). The Periplasmic portion of the chain corresponds to 22 to 99 (GKNSVPDYLV…KENSTRNVNN (78 aa)). A coiled-coil region spans residues 29-53 (YLVLKENVVRQQSANEKLQQRNKLL).

This sequence belongs to the FtsB family. As to quaternary structure, part of a complex composed of FtsB, FtsL and FtsQ.

The protein localises to the cell inner membrane. Functionally, essential cell division protein. May link together the upstream cell division proteins, which are predominantly cytoplasmic, with the downstream cell division proteins, which are predominantly periplasmic. In Colwellia psychrerythraea (strain 34H / ATCC BAA-681) (Vibrio psychroerythus), this protein is Cell division protein FtsB.